A 193-amino-acid polypeptide reads, in one-letter code: Ion-translocating oxidoreductase complex subunit A (193 aa).

A run of 6 helical transmembrane segments spans residues L5–L25, M39–V59, F62–A82, L102–L122, A134–I154, and S171–V191.

It belongs to the NqrDE/RnfAE family. The complex is composed of six subunits: RnfA, RnfB, RnfC, RnfD, RnfE and RnfG.

It is found in the cell inner membrane. Its function is as follows. Part of a membrane-bound complex that couples electron transfer with translocation of ions across the membrane. The protein is Ion-translocating oxidoreductase complex subunit A of Edwardsiella ictaluri (strain 93-146).